Here is a 475-residue protein sequence, read N- to C-terminus: Bifunctional protein HldE (475 aa).

The tract at residues 1–318 (MKVTLPDFER…ENAVRGRAET (318 aa)) is ribokinase. Residue 195 to 198 (NLSE) participates in ATP binding. Asp-264 is an active-site residue. The cytidylyltransferase stretch occupies residues 344 to 475 (MTNGVFDILH…NIIKKIQKNS (132 aa)).

It in the N-terminal section; belongs to the carbohydrate kinase PfkB family. In the C-terminal section; belongs to the cytidylyltransferase family. Homodimer.

It catalyses the reaction D-glycero-beta-D-manno-heptose 7-phosphate + ATP = D-glycero-beta-D-manno-heptose 1,7-bisphosphate + ADP + H(+). It carries out the reaction D-glycero-beta-D-manno-heptose 1-phosphate + ATP + H(+) = ADP-D-glycero-beta-D-manno-heptose + diphosphate. The protein operates within nucleotide-sugar biosynthesis; ADP-L-glycero-beta-D-manno-heptose biosynthesis; ADP-L-glycero-beta-D-manno-heptose from D-glycero-beta-D-manno-heptose 7-phosphate: step 1/4. Its pathway is nucleotide-sugar biosynthesis; ADP-L-glycero-beta-D-manno-heptose biosynthesis; ADP-L-glycero-beta-D-manno-heptose from D-glycero-beta-D-manno-heptose 7-phosphate: step 3/4. Catalyzes the phosphorylation of D-glycero-D-manno-heptose 7-phosphate at the C-1 position to selectively form D-glycero-beta-D-manno-heptose-1,7-bisphosphate. In terms of biological role, catalyzes the ADP transfer from ATP to D-glycero-beta-D-manno-heptose 1-phosphate, yielding ADP-D-glycero-beta-D-manno-heptose. The polypeptide is Bifunctional protein HldE (Cronobacter sakazakii (strain ATCC BAA-894) (Enterobacter sakazakii)).